Consider the following 319-residue polypeptide: Aspartate carbamoyltransferase catalytic subunit (319 aa).

Carbamoyl phosphate is bound by residues R64 and T65. K92 serves as a coordination point for L-aspartate. Carbamoyl phosphate is bound by residues R114, H142, and Q145. 2 residues coordinate L-aspartate: R175 and R229. Carbamoyl phosphate-binding residues include G270 and P271.

This sequence belongs to the aspartate/ornithine carbamoyltransferase superfamily. ATCase family. In terms of assembly, heterododecamer (2C3:3R2) of six catalytic PyrB chains organized as two trimers (C3), and six regulatory PyrI chains organized as three dimers (R2).

It catalyses the reaction carbamoyl phosphate + L-aspartate = N-carbamoyl-L-aspartate + phosphate + H(+). It participates in pyrimidine metabolism; UMP biosynthesis via de novo pathway; (S)-dihydroorotate from bicarbonate: step 2/3. Catalyzes the condensation of carbamoyl phosphate and aspartate to form carbamoyl aspartate and inorganic phosphate, the committed step in the de novo pyrimidine nucleotide biosynthesis pathway. The chain is Aspartate carbamoyltransferase catalytic subunit from Rhodospirillum rubrum (strain ATCC 11170 / ATH 1.1.1 / DSM 467 / LMG 4362 / NCIMB 8255 / S1).